Here is a 64-residue protein sequence, read N- to C-terminus: Insect toxin OsI1 (64 aa).

The LCN-type CS-alpha/beta domain occupies 1–61 (DGYPKQKDGC…MWKYETNTCG (61 aa)). 4 disulfides stabilise this stretch: Cys10–Cys60, Cys14–Cys35, Cys21–Cys42, and Cys25–Cys44. Gly61 is modified (glycine amide).

This sequence belongs to the long (4 C-C) scorpion toxin superfamily. Sodium channel inhibitor family. Beta subfamily. As to expression, expressed by the venom gland.

It localises to the secreted. Depressant insect beta-toxins cause a transient contraction paralysis followed by a slow flaccid paralysis. They bind voltage-independently at site-4 of sodium channels (Nav) and shift the voltage of activation toward more negative potentials thereby affecting sodium channel activation and promoting spontaneous and repetitive firing. This toxin is active only on insects. In Orthochirus scrobiculosus (Central Asian scorpion), this protein is Insect toxin OsI1.